Here is a 653-residue protein sequence, read N- to C-terminus: Fructose-1,6-bisphosphatase class 3 2 (653 aa).

It belongs to the FBPase class 3 family. The cofactor is Mn(2+).

It catalyses the reaction beta-D-fructose 1,6-bisphosphate + H2O = beta-D-fructose 6-phosphate + phosphate. Its pathway is carbohydrate biosynthesis; gluconeogenesis. This is Fructose-1,6-bisphosphatase class 3 2 from Clostridium beijerinckii (strain ATCC 51743 / NCIMB 8052) (Clostridium acetobutylicum).